Consider the following 255-residue polypeptide: Flagellar brake protein YcgR (255 aa).

The PilZ domain maps to 130–245 (QRREHFRVPL…MAAHLQRFVM (116 aa)).

It belongs to the YcgR family. Monomer. Interacts with the flagellar basal bodies.

It is found in the bacterial flagellum basal body. In terms of biological role, acts as a flagellar brake, regulating swimming and swarming in a bis-(3'-5') cyclic diguanylic acid (c-di-GMP)-dependent manner. Binds 1 c-di-GMP dimer per subunit. Increasing levels of c-di-GMP lead to decreased motility. In Thiobacillus denitrificans (strain ATCC 25259 / T1), this protein is Flagellar brake protein YcgR.